Reading from the N-terminus, the 291-residue chain is N-acetylmannosamine kinase (291 aa).

ATP contacts are provided by residues 5 to 12 (AIDIGGTK) and 132 to 139 (GVGGGVVS). Zn(2+)-binding residues include His-156, Cys-166, Cys-168, and Cys-173.

It belongs to the ROK (NagC/XylR) family. NanK subfamily. Homodimer.

It carries out the reaction an N-acyl-D-mannosamine + ATP = an N-acyl-D-mannosamine 6-phosphate + ADP + H(+). The protein operates within amino-sugar metabolism; N-acetylneuraminate degradation; D-fructose 6-phosphate from N-acetylneuraminate: step 2/5. In terms of biological role, catalyzes the phosphorylation of N-acetylmannosamine (ManNAc) to ManNAc-6-P. The polypeptide is N-acetylmannosamine kinase (Escherichia coli O139:H28 (strain E24377A / ETEC)).